A 479-amino-acid polypeptide reads, in one-letter code: GDP-fucose protein O-fucosyltransferase 3 (479 aa).

The Cytoplasmic portion of the chain corresponds to 1–8; the sequence is MVRIQRRK. The chain crosses the membrane as a helical; Signal-anchor for type II membrane protein span at residues 9–31; sequence LLASCLCVTATVFLLVTLQVMVE. At 32–479 the chain is on the lumenal side; the sequence is LGKFERKEFK…QEFWGLVFKD (448 aa). Residues asparagine 110 and asparagine 168 are each glycosylated (N-linked (GlcNAc...) asparagine). A disulfide bond links cysteine 389 and cysteine 392.

It belongs to the glycosyltransferase 10 family. Expressed in lung, digestive tract, gall bladder, placenta, kidney, uterus and brain. Not detected in spleen, heart, muscle, liver and pancreas.

The protein resides in the endoplasmic reticulum membrane. It is found in the golgi apparatus membrane. The protein localises to the golgi apparatus. Its subcellular location is the lysosome. It catalyses the reaction L-threonyl-[protein] + GDP-beta-L-fucose = 3-O-(alpha-L-fucosyl)-L-threonyl-[protein] + GDP + H(+). The catalysed reaction is L-seryl-[protein] + GDP-beta-L-fucose = 3-O-(alpha-L-fucosyl)-L-seryl-[protein] + GDP + H(+). Its pathway is protein modification; protein glycosylation. Its function is as follows. Protein O-fucosyltransferase that specifically catalyzes O-fucosylation of serine or threonine residues in EMI domains of target proteins, such as MMRN1, MMRN2 and EMID1. Attaches fucose through an O-glycosidic linkage. O-fucosylation of EMI domain-containing proteins may be required for facilitating protein folding and secretion. May also show alpha-(1,3)-fucosyltransferase activity toward the innermost N-acetyl glucosamine (GlcNAc) residue in biantennary N-glycan acceptors. However, this was tested with a library of synthetic substrates and this activity is unsure in vivo. May be involved in biosynthesis of Lewis X-carrying biantennary N-glycans that regulate neuron stem cell self-renewal during brain development. This chain is GDP-fucose protein O-fucosyltransferase 3, found in Homo sapiens (Human).